We begin with the raw amino-acid sequence, 274 residues long: 2-dehydro-3-deoxyphosphooctonate aldolase (274 aa).

Belongs to the KdsA family.

Its subcellular location is the cytoplasm. The enzyme catalyses D-arabinose 5-phosphate + phosphoenolpyruvate + H2O = 3-deoxy-alpha-D-manno-2-octulosonate-8-phosphate + phosphate. Its pathway is carbohydrate biosynthesis; 3-deoxy-D-manno-octulosonate biosynthesis; 3-deoxy-D-manno-octulosonate from D-ribulose 5-phosphate: step 2/3. It functions in the pathway bacterial outer membrane biogenesis; lipopolysaccharide biosynthesis. This Legionella pneumophila (strain Lens) protein is 2-dehydro-3-deoxyphosphooctonate aldolase.